The following is a 447-amino-acid chain: Tyrosine aminotransferase (447 aa).

Lys273 is subject to N6-(pyridoxal phosphate)lysine. Ser441 is subject to Phosphoserine.

Belongs to the class-I pyridoxal-phosphate-dependent aminotransferase family. In terms of assembly, homodimer. Pyridoxal 5'-phosphate serves as cofactor.

The enzyme catalyses L-tyrosine + 2-oxoglutarate = 3-(4-hydroxyphenyl)pyruvate + L-glutamate. It functions in the pathway amino-acid degradation; L-phenylalanine degradation; acetoacetate and fumarate from L-phenylalanine: step 2/6. In terms of biological role, transaminase involved in tyrosine breakdown. Converts tyrosine to p-hydroxyphenylpyruvate. Can catalyze the reverse reaction, using glutamic acid, with 2-oxoglutarate as cosubstrate (in vitro). Has much lower affinity and transaminase activity for phenylalanine. The polypeptide is Tyrosine aminotransferase (TAT) (Bos taurus (Bovine)).